The chain runs to 604 residues: Serine/threonine-protein kinase A-Raf (604 aa).

An RBD domain is found at 19–91; that stretch reads GTVKVYLPNK…DGEELIVEVL (73 aa). The Phorbol-ester/DAG-type zinc finger occupies 98 to 144; that stretch reads MHNFVRKTFFSLAFCDFCLKFLFHGFRCQTCGYKFHQHCSSKVPTVC. Zn(2+)-binding residues include His99, Cys112, Cys115, Cys125, Cys128, His133, Cys136, and Cys144. Phosphoserine is present on residues Ser157 and Ser162. Disordered stretches follow at residues 178–222 and 241–287; these read ELLT…HMVS and TDAA…DEKK. At Thr181 the chain carries Phosphothreonine. Ser186 carries the post-translational modification Phosphoserine. The segment covering 210 to 222 has biased composition (polar residues); sequence IRSTSTPNVHMVS. The span at 252-265 shows a compositional bias: low complexity; that stretch reads PRGSPSPASVSSGR. A phosphoserine mark is found at Ser255 and Ser267. Positions 272 to 287 are enriched in basic and acidic residues; that stretch reads LPAEQRERKSLADEKK. Residues 308–568 enclose the Protein kinase domain; it reads VQLLKRIGTG…PQILATIELL (261 aa). ATP is bound by residues 314-322 and Lys334; that span reads IGTGSFGTV. Thr316 carries the post-translational modification Phosphothreonine. Asp427 functions as the Proton acceptor in the catalytic mechanism.

This sequence belongs to the protein kinase superfamily. TKL Ser/Thr protein kinase family. RAF subfamily. Interacts with TH1L/NELFD. Zn(2+) is required as a cofactor. In terms of processing, dephosphorylation by the SHOC2-MRAS-PP1c (SMP) complex consisting of SHOC2, GTP-bound M-Ras/MRAS and the catalytic subunit of protein phosphatase 1 (PPP1CA, PPP1CB or PPP1CC); this relieves inactivation and stimulates kinase activity.

It carries out the reaction L-seryl-[protein] + ATP = O-phospho-L-seryl-[protein] + ADP + H(+). The enzyme catalyses L-threonyl-[protein] + ATP = O-phospho-L-threonyl-[protein] + ADP + H(+). Functionally, involved in the transduction of mitogenic signals from the cell membrane to the nucleus. May also regulate the TOR signaling cascade. Phosphorylates PFKFB2. This chain is Serine/threonine-protein kinase A-Raf (Araf), found in Rattus norvegicus (Rat).